The chain runs to 253 residues: Indole-3-glycerol phosphate synthase (253 aa).

This sequence belongs to the TrpC family.

It catalyses the reaction 1-(2-carboxyphenylamino)-1-deoxy-D-ribulose 5-phosphate + H(+) = (1S,2R)-1-C-(indol-3-yl)glycerol 3-phosphate + CO2 + H2O. The protein operates within amino-acid biosynthesis; L-tryptophan biosynthesis; L-tryptophan from chorismate: step 4/5. The protein is Indole-3-glycerol phosphate synthase of Bacillus cereus (strain B4264).